The sequence spans 89 residues: Mapacalcine (89 aa).

Gln-89 is subject to Glutamine amide.

Homodimer. Contains disulfide bonds which may also be involved in dimerization.

Blocks calcium currents via interaction with a yet unknown target protein. Has no effect on L-type, T-type, N-type or P/Q-type voltage-gated calcium channels (VGCC). Has no effect on voltage-gated potassium or chloride channels. Blocks non-L-type VGCC calcium currents in mouse duodenal myocytes (IC(50)=0.2 uM). Blocks calcium influx induced by hypoxia/reoxygenation in rat hepatocytes. The polypeptide is Mapacalcine (Pione vastifica (Boring sponge)).